We begin with the raw amino-acid sequence, 132 residues long: MARILGVDIPNDKRVVISLTYIFGIGKSTSQQILKLANIDENIRVKDLADEQIAEIRRVALNFVKANGEKLQLEGDLRRTVAMDIKRLMEIGSYRGIRHRRGLPVRGQRTKTNARTRKGPRKTVANKKIETR.

Basic residues predominate over residues 101 to 125 (RGLPVRGQRTKTNARTRKGPRKTVA). Residues 101–132 (RGLPVRGQRTKTNARTRKGPRKTVANKKIETR) form a disordered region.

It belongs to the universal ribosomal protein uS13 family. Part of the 30S ribosomal subunit. Forms a loose heterodimer with protein S19. Forms two bridges to the 50S subunit in the 70S ribosome.

Located at the top of the head of the 30S subunit, it contacts several helices of the 16S rRNA. In the 70S ribosome it contacts the 23S rRNA (bridge B1a) and protein L5 of the 50S subunit (bridge B1b), connecting the 2 subunits; these bridges are implicated in subunit movement. Contacts the tRNAs in the A and P-sites. This chain is Small ribosomal subunit protein uS13, found in Ureaplasma parvum serovar 3 (strain ATCC 27815 / 27 / NCTC 11736).